The sequence spans 343 residues: Ornithine carbamoyltransferase (343 aa).

Carbamoyl phosphate-binding positions include 62–65 (STRT), Gln-89, Arg-113, and 140–143 (HPTQ). Residues Asn-172, Asp-236, and 240–241 (SM) each bind L-ornithine. Residues 278–279 (CL) and Arg-323 contribute to the carbamoyl phosphate site.

This sequence belongs to the aspartate/ornithine carbamoyltransferase superfamily. OTCase family.

It is found in the cytoplasm. It catalyses the reaction carbamoyl phosphate + L-ornithine = L-citrulline + phosphate + H(+). It functions in the pathway amino-acid degradation; L-arginine degradation via ADI pathway; carbamoyl phosphate from L-arginine: step 2/2. In terms of biological role, reversibly catalyzes the transfer of the carbamoyl group from carbamoyl phosphate (CP) to the N(epsilon) atom of ornithine (ORN) to produce L-citrulline. The protein is Ornithine carbamoyltransferase of Levilactobacillus brevis (strain ATCC 367 / BCRC 12310 / CIP 105137 / JCM 1170 / LMG 11437 / NCIMB 947 / NCTC 947) (Lactobacillus brevis).